The following is a 396-amino-acid chain: Elongation factor Tu 1 (396 aa).

Residues Lys10–Gln206 enclose the tr-type G domain. The segment at Gly19 to Thr26 is G1. Residue Gly19–Thr26 coordinates GTP. Thr26 serves as a coordination point for Mg(2+). The G2 stretch occupies residues Gly60–Asn64. Positions Asp81–Gly84 are G3. GTP contacts are provided by residues Asp81–His85 and Asn136–Asp139. The interval Asn136–Asp139 is G4. A G5 region spans residues Ser174–Leu176.

It belongs to the TRAFAC class translation factor GTPase superfamily. Classic translation factor GTPase family. EF-Tu/EF-1A subfamily. As to quaternary structure, monomer.

The protein resides in the cytoplasm. It carries out the reaction GTP + H2O = GDP + phosphate + H(+). GTP hydrolase that promotes the GTP-dependent binding of aminoacyl-tRNA to the A-site of ribosomes during protein biosynthesis. This chain is Elongation factor Tu 1, found in Nitrosomonas eutropha (strain DSM 101675 / C91 / Nm57).